Reading from the N-terminus, the 592-residue chain is NADH-quinone oxidoreductase subunit C/D (592 aa).

Residues 1–183 (MLTEFNSIPA…GPYILTEEKE (183 aa)) are NADH dehydrogenase I subunit C. The NADH dehydrogenase I subunit D stretch occupies residues 207–592 (DFMFLNLGPN…IDFVMADVDR (386 aa)).

It in the N-terminal section; belongs to the complex I 30 kDa subunit family. The protein in the C-terminal section; belongs to the complex I 49 kDa subunit family. NDH-1 is composed of 13 different subunits. Subunits NuoB, CD, E, F, and G constitute the peripheral sector of the complex.

It is found in the cell inner membrane. The enzyme catalyses a quinone + NADH + 5 H(+)(in) = a quinol + NAD(+) + 4 H(+)(out). NDH-1 shuttles electrons from NADH, via FMN and iron-sulfur (Fe-S) centers, to quinones in the respiratory chain. The immediate electron acceptor for the enzyme in this species is believed to be ubiquinone. Couples the redox reaction to proton translocation (for every two electrons transferred, four hydrogen ions are translocated across the cytoplasmic membrane), and thus conserves the redox energy in a proton gradient. The sequence is that of NADH-quinone oxidoreductase subunit C/D from Acidiphilium cryptum (strain JF-5).